Consider the following 531-residue polypeptide: Multidrug resistance protein fnx1 (531 aa).

The Cytoplasmic portion of the chain corresponds to 1 to 30 (MVDQVNLATEQTSLLYPEVSRKKEELSVNK). A helical transmembrane segment spans residues 31–51 (WTILPALWVGGFLSALDMTIV). Residues 52-225 (ASLYPVIGSE…NASLLSRIDY (174 aa)) are Lumenal-facing. Residues 226 to 246 (LGSFLLVTGITALVVTFNMGG) form a helical membrane-spanning segment. The Cytoplasmic segment spans residues 247-252 (DAFPWV). The chain crosses the membrane as a helical span at residues 253–273 (SPVIITLLVSSVLILFAFYWV). The Lumenal portion of the chain corresponds to 274–297 (EKNIAVEPIAPVEILSQPTPLNVC). Residues 298–318 (LGNFFNAFCSFVIVYELPLFF) traverse the membrane as a helical segment. The Cytoplasmic portion of the chain corresponds to 319 to 360 (ETTLLMPSSEAGVRIFPYVISTSVGSLCSGLYMKKTGRYRNL). A helical transmembrane segment spans residues 361 to 381 (VIAGFFFMLMGIVSFAVLTSF). Over 382-385 (GHRT) the chain is Lumenal. Residues 386–406 (PLILISLCLAMTGCSYGMNLT) form a helical membrane-spanning segment. At 407-496 (STLIAIISSL…QKLVIKSYAT (90 aa)) the chain is on the cytoplasmic side. Residues 497–517 (AFTWTFALVAIIAFAGFWCSL) form a helical membrane-spanning segment. At 518-531 (RIKQFYLHTSVDRS) the chain is on the lumenal side.

This sequence belongs to the major facilitator superfamily.

It localises to the vacuole membrane. Its function is as follows. Efflux transporter. Confers resistance to a variety of toxic compounds. In Schizosaccharomyces pombe (strain 972 / ATCC 24843) (Fission yeast), this protein is Multidrug resistance protein fnx1 (fnx1).